Consider the following 741-residue polypeptide: Eukaryotic translation initiation factor 3 subunit B (741 aa).

The segment covering 1–10 has biased composition (polar residues); the sequence is MAPSFDTLSE. The tract at residues 1 to 22 is disordered; sequence MAPSFDTLSEQDLHEEEEEEID. The span at 13-22 shows a compositional bias: acidic residues; that stretch reads LHEEEEEEID. The RRM domain maps to 40 to 126; the sequence is TFVVIDGLPV…HTLLVNKLMD (87 aa). WD repeat units follow at residues 193–230, 232–289, 303–344, 514–557, and 572–610; these read AHWT…KQKQ, PHPF…RSFV, QPKK…LLGK, IEKK…EKPE, and LEHY…HTFS. Positions 695-722 are disordered; it reads KDAYGLPEDVDDPKKAKDAPAVTSEQGE.

This sequence belongs to the eIF-3 subunit B family. Component of the eukaryotic translation initiation factor 3 (eIF-3) complex.

The protein localises to the cytoplasm. In terms of biological role, RNA-binding component of the eukaryotic translation initiation factor 3 (eIF-3) complex, which is involved in protein synthesis of a specialized repertoire of mRNAs and, together with other initiation factors, stimulates binding of mRNA and methionyl-tRNAi to the 40S ribosome. The eIF-3 complex specifically targets and initiates translation of a subset of mRNAs involved in cell proliferation. This chain is Eukaryotic translation initiation factor 3 subunit B (prt1), found in Aspergillus clavatus (strain ATCC 1007 / CBS 513.65 / DSM 816 / NCTC 3887 / NRRL 1 / QM 1276 / 107).